Reading from the N-terminus, the 404-residue chain is Multidrug resistance protein MdtG (404 aa).

11 helical membrane-spanning segments follow: residues Leu19–Val39, Leu56–Ala76, Leu90–Ile110, Ala113–Val133, Thr144–Ala164, Pro171–Ile191, Leu222–Leu242, Ile254–Pro274, Ile288–Thr308, Phe317–Asn337, and Ala376–Leu396.

It belongs to the major facilitator superfamily. DHA1 family. MdtG (TC 2.A.1.2.20) subfamily.

It is found in the cell inner membrane. The chain is Multidrug resistance protein MdtG from Salmonella schwarzengrund (strain CVM19633).